Reading from the N-terminus, the 254-residue chain is Pimeloyl-[acyl-carrier protein] methyl ester esterase (254 aa).

In terms of domain architecture, AB hydrolase-1 spans 14-238; the sequence is VVMLHGWGLH…QASHAPFLSH (225 aa). Residues W20, 80-81, and 142-146 each bind substrate; these read SL and FLALQ. The Nucleophile role is filled by S80. Active-site residues include D204 and H232. Substrate is bound at residue H232.

It belongs to the AB hydrolase superfamily. Carboxylesterase BioH family. Monomer.

The protein resides in the cytoplasm. It catalyses the reaction 6-carboxyhexanoyl-[ACP] methyl ester + H2O = 6-carboxyhexanoyl-[ACP] + methanol + H(+). The protein operates within cofactor biosynthesis; biotin biosynthesis. Functionally, the physiological role of BioH is to remove the methyl group introduced by BioC when the pimeloyl moiety is complete. It allows to synthesize pimeloyl-ACP via the fatty acid synthetic pathway through the hydrolysis of the ester bonds of pimeloyl-ACP esters. The protein is Pimeloyl-[acyl-carrier protein] methyl ester esterase of Chromobacterium violaceum (strain ATCC 12472 / DSM 30191 / JCM 1249 / CCUG 213 / NBRC 12614 / NCIMB 9131 / NCTC 9757 / MK).